Reading from the N-terminus, the 354-residue chain is Envelope protein US28 (354 aa).

Topologically, residues 1-37 (MTPTTTTAELTTEFDYDEDATPCVFTDVLNQSKPVTL) are extracellular. Residue asparagine 30 is glycosylated (N-linked (GlcNAc...) asparagine; by host). A helical membrane pass occupies residues 38–58 (FLYGVVFLFGSIGNFLVIFTI). Topologically, residues 59-69 (TWRRRIQCSGD) are cytoplasmic. A helical membrane pass occupies residues 70-90 (VYFINLAAADLLFVCTLPLWM). The Extracellular portion of the chain corresponds to 91–101 (QYLLDHNSLAS). The helical transmembrane segment at 102-122 (VPCTLLTACFYVAMFASLCFI) threads the bilayer. Residues 123 to 145 (TEIALDRYYAIVYMRYRPVKQAC) lie on the Cytoplasmic side of the membrane. The helical transmembrane segment at 146–166 (LFSIFWWIFAVIIAIPHFMVV) threads the bilayer. Topologically, residues 167–183 (TKKDNQCMTDYDYLEVS) are extracellular. A helical membrane pass occupies residues 184–204 (YPIILNVELMLGAFVIPLSVI). Residues 205-228 (SYCYYRISRIVAVSQSRHKGRIVR) are Cytoplasmic-facing. Residues 229-249 (VLIAVVLVFIIFWLPYHLTLF) traverse the membrane as a helical segment. Over 250 to 273 (VDTLKLLKWISSSCEFERSLKRAL) the chain is Extracellular. Residues 274-294 (ILTESLAFCHCCLNPLLYVFV) traverse the membrane as a helical segment. The Cytoplasmic segment spans residues 295–354 (GTKFRQELHCLLAEFRQRLFSRDVSWYHSMSFSRRGSPSRRETSSDTLSDEVCRVSQIIP).

Belongs to the G-protein coupled receptor 1 family. As to quaternary structure, interacts with host GPRASP1; this interaction targets US28 to lysosomes for degradation. Interacts with host CX3CL1/Fractalkine (via N-terminus). Phosphorylated. High phosphorylation occurs concomitantly with receptor endocytosis and correlate with low receptor presence at the plasma membrane.

The protein localises to the host cell membrane. Functionally, receptor for a C-C type chemokine. Binds to a great number of different CC-chemokines including CCL5/RANTES, CCL2/MCP-1, CCL3/MIP-1-alpha as well as CX3CL1/Fractalkine. Transduces signals resulting in the activation of MAP kinase signaling pathways and augmentation of intracellular calcium ion levels, leading to alterations in chemotactic behavior of vascular smooth muscle cells and macrophages. The US28 receptor also exhibits high levels of agonist-independent signaling activity and agonist-independent endocytosis. Interacts with the host Gi complex without activating it, thereby probably interfering with the chemokine-Gi signaling. May also function as a G protein sink to sequester G protein from the cell surface via internalization. Interacts with endogenous Gaq/11 subunits and thereby constitutively activates phospholipase C. The polypeptide is Envelope protein US28 (US28) (Human cytomegalovirus (strain Merlin) (HHV-5)).